The following is a 277-amino-acid chain: Putative glucose-6-phosphate/phosphate-translocator-like protein 1 (277 aa).

A run of 5 helical transmembrane segments spans residues 8-28, 46-66, 124-143, 153-173, and 230-250; these read VLPSLTAIVGIGIYFAIWWAL, LWLTLTLSLACGSLMMLVSWV, MIGFMGAMISNLAFVFRNIF, VSVMNYYACLSMMSLLIVTPF, and PLKHVNALGAAIAILGTFIYS.

The protein belongs to the TPT transporter family. GPT (TC 2.A.7.9) subfamily.

It is found in the membrane. This is Putative glucose-6-phosphate/phosphate-translocator-like protein 1 from Arabidopsis thaliana (Mouse-ear cress).